Consider the following 356-residue polypeptide: MTRLTLALDVMGGDFGPSVTVPAALQALNSNSQLTLLLVGNPDAITPLLAKADFEQRSRLQIIPAQSVIASDVRPSQAIRASRGSSMRVALELVKEGRAQACVSAGNTGALMGLAKLLLKPLEGIERPALVTVLPHQQKGKTVVLDLGANVDCDSTMLVQFAIMGSVLAEEVVEIPNPRVALLNIGEEEVKGLDSIRDASAVLKTIPSINYIGYLEANELLTGKTDVLVCDGFTGNVTLKTMEGVVRMFLSLLKSQGEGKKRSWWLLLLKRWLQKSLTRRFSHLNPDQYNGACLLGLRGTVIKSHGAANQRAFAVAIEQAVQAVQRQVPQRIAARLESVYPAGFELLDGGKSGTLR.

It belongs to the PlsX family. As to quaternary structure, homodimer. Probably interacts with PlsY.

The protein localises to the cytoplasm. The catalysed reaction is a fatty acyl-[ACP] + phosphate = an acyl phosphate + holo-[ACP]. Its pathway is lipid metabolism; phospholipid metabolism. Its function is as follows. Catalyzes the reversible formation of acyl-phosphate (acyl-PO(4)) from acyl-[acyl-carrier-protein] (acyl-ACP). This enzyme utilizes acyl-ACP as fatty acyl donor, but not acyl-CoA. This Escherichia coli (strain 55989 / EAEC) protein is Phosphate acyltransferase.